We begin with the raw amino-acid sequence, 334 residues long: Transaldolase (334 aa).

K136 (schiff-base intermediate with substrate) is an active-site residue.

Belongs to the transaldolase family. Type 1 subfamily. Homodimer.

The protein resides in the cytoplasm. It catalyses the reaction D-sedoheptulose 7-phosphate + D-glyceraldehyde 3-phosphate = D-erythrose 4-phosphate + beta-D-fructose 6-phosphate. It participates in carbohydrate degradation; pentose phosphate pathway; D-glyceraldehyde 3-phosphate and beta-D-fructose 6-phosphate from D-ribose 5-phosphate and D-xylulose 5-phosphate (non-oxidative stage): step 2/3. Transaldolase is important for the balance of metabolites in the pentose-phosphate pathway. This is Transaldolase from Nostoc punctiforme (strain ATCC 29133 / PCC 73102).